The chain runs to 121 residues: Large ribosomal subunit protein bL12 (121 aa).

The protein belongs to the bacterial ribosomal protein bL12 family. In terms of assembly, homodimer. Part of the ribosomal stalk of the 50S ribosomal subunit. Forms a multimeric L10(L12)X complex, where L10 forms an elongated spine to which 2 to 4 L12 dimers bind in a sequential fashion. Binds GTP-bound translation factors.

Forms part of the ribosomal stalk which helps the ribosome interact with GTP-bound translation factors. Is thus essential for accurate translation. The sequence is that of Large ribosomal subunit protein bL12 from Mesomycoplasma hyopneumoniae (strain 7448) (Mycoplasma hyopneumoniae).